We begin with the raw amino-acid sequence, 450 residues long: MSGIRFDYSKASGYINTHELDYLGKMTETAHQLLHEKTGAGNEFLGWLDLPKNYDQDEFQRVQNCAEKIKNDSDVLIVIGIGGSYLGSRAAIEMLTHTFHNSLPKDKRQGPEVYFAGHNISSTYLKHLLDIIEGKDISLNVISKSGTTTEPALAFRVLKEYMEKKYGKEETTKRIYATTDQAKGALKQLADEEGYESFIIPDDVGGRFSVLTAVGLLPIAAAGINIEEVMQGAKQALQDFNHSNIDKNSCYQYAIVRNALYRKGKTTEIMVNYEPALHYIGEWWKQLFGESEGKDQKGIFPASVSFSTDLHSMGQYIQEGMRNIFETVLHVENTQEKMIIQPTDADLDGLNYLAGKTVDFVNEKAFEGTLLAHTDGGVPNLIIHIPEITPYYFGYLVYFFEKACAISGYLLGVNPFDQPGVEAYKKNMFALLGKPGFEEAQRELQKRLEK.

Catalysis depends on glutamate 290, which acts as the Proton donor. Active-site residues include histidine 311 and lysine 425.

The protein belongs to the GPI family.

It is found in the cytoplasm. It carries out the reaction alpha-D-glucose 6-phosphate = beta-D-fructose 6-phosphate. The protein operates within carbohydrate biosynthesis; gluconeogenesis. It functions in the pathway carbohydrate degradation; glycolysis; D-glyceraldehyde 3-phosphate and glycerone phosphate from D-glucose: step 2/4. Functionally, catalyzes the reversible isomerization of glucose-6-phosphate to fructose-6-phosphate. The polypeptide is Glucose-6-phosphate isomerase (Alkaliphilus metalliredigens (strain QYMF)).